Here is a 635-residue protein sequence, read N- to C-terminus: Threonine--tRNA ligase (635 aa).

The TGS domain occupies 1-61; sequence MVSIRLPDGS…DRDAALAIIT (61 aa). The catalytic stretch occupies residues 242 to 533; that stretch reads DHRKLGKQLD…LIEHHAGAMP (292 aa). The Zn(2+) site is built by Cys-333, His-384, and His-510.

It belongs to the class-II aminoacyl-tRNA synthetase family. Homodimer. It depends on Zn(2+) as a cofactor.

It is found in the cytoplasm. It carries out the reaction tRNA(Thr) + L-threonine + ATP = L-threonyl-tRNA(Thr) + AMP + diphosphate + H(+). Functionally, catalyzes the attachment of threonine to tRNA(Thr) in a two-step reaction: L-threonine is first activated by ATP to form Thr-AMP and then transferred to the acceptor end of tRNA(Thr). Also edits incorrectly charged L-seryl-tRNA(Thr). This is Threonine--tRNA ligase from Burkholderia ambifaria (strain ATCC BAA-244 / DSM 16087 / CCUG 44356 / LMG 19182 / AMMD) (Burkholderia cepacia (strain AMMD)).